A 730-amino-acid chain; its full sequence is Hepatocyte growth factor (730 aa).

A signal peptide spans 1-31 (MWVTRLLPVLLLQHVLLHLLLLPIAIPYAEG). Gln32 carries the pyrrolidone carboxylic acid modification. A PAN domain is found at 37–123 (NTLHEFKRSA…HEFDLYENKD (87 aa)). Disulfide bonds link Cys70-Cys96, Cys74-Cys84, Cys128-Cys206, Cys149-Cys189, Cys177-Cys201, Cys211-Cys288, Cys232-Cys271, and Cys260-Cys283. Kringle domains lie at 128–206 (CIIG…IPQC) and 211–288 (CMTC…IKMC). Asn294 carries an N-linked (GlcNAc...) asparagine glycan. Disulfide bonds link Cys305-Cys383, Cys326-Cys365, Cys354-Cys377, Cys391-Cys469, Cys412-Cys452, Cys440-Cys464, Cys487-Cys606, Cys519-Cys535, Cys614-Cys681, Cys644-Cys660, and Cys671-Cys699. 2 consecutive Kringle domains span residues 305-383 (CIQG…IPKC) and 391-469 (CYRG…ISRC). Residues 495–723 (VVNGIPTRTN…YAKWIHKIIL (229 aa)) form the Peptidase S1 domain. Asn568 and Asn655 each carry an N-linked (GlcNAc...) asparagine glycan.

The protein belongs to the peptidase S1 family. Plasminogen subfamily. In terms of assembly, dimer of an alpha chain and a beta chain linked by a disulfide bond. Interacts with SRPX2; the interaction increases HGF mitogenic activity. Post-translationally, the single-chain precursor undergoes proteolytic processing by TMPRSS13 resulting in an active two-chain form. The single-chain precursor undergoes proteolytic processing by HGFAC resulting in an active two-chain form.

Functionally, potent mitogen for mature parenchymal hepatocyte cells, seems to be a hepatotrophic factor, and acts as a growth factor for a broad spectrum of tissues and cell types. Activating ligand for the receptor tyrosine kinase MET by binding to it and promoting its dimerization. Activates MAPK signaling following TMPRSS13 cleavage and activation. The polypeptide is Hepatocyte growth factor (HGF) (Bos taurus (Bovine)).